The chain runs to 694 residues: Type VI secretion system spike protein VgrG2 (694 aa).

It belongs to the VgrG protein family.

The protein localises to the secreted. In terms of biological role, part of the type VI secretion system specialized secretion system, which delivers several virulence factors in both prokaryotic and eukaryotic cells during infection. Forms the spike at the tip of the elongating tube formed by haemolysin co-regulated protein Hcp. Allows the delivery of the VasX antibacterial toxin to target cells where it exerts its toxicity. The polypeptide is Type VI secretion system spike protein VgrG2 (vgrG2) (Vibrio cholerae serotype O1 (strain ATCC 39315 / El Tor Inaba N16961)).